We begin with the raw amino-acid sequence, 591 residues long: Pyruvate kinase 2 (591 aa).

Residue R38 participates in substrate binding. Residues N40, S42, and D72 each coordinate K(+). An ATP-binding site is contributed by 40 to 43; sequence NFSH. ATP is bound by residues R79 and K164. Residue E229 coordinates Mg(2+). Residues G252, D253, and T285 each coordinate substrate. D253 contacts Mg(2+).

Belongs to the pyruvate kinase family. It in the C-terminal section; belongs to the PEP-utilizing enzyme family. Homotetramer. The cofactor is Mg(2+). Requires K(+) as cofactor.

The catalysed reaction is pyruvate + ATP = phosphoenolpyruvate + ADP + H(+). It functions in the pathway carbohydrate degradation; glycolysis; pyruvate from D-glyceraldehyde 3-phosphate: step 5/5. The chain is Pyruvate kinase 2 (pyk2) from Synechocystis sp. (strain ATCC 27184 / PCC 6803 / Kazusa).